We begin with the raw amino-acid sequence, 896 residues long: Sodium/hydrogen exchanger 5 (896 aa).

Residues 1–45 (MLRAALSLLALPLAGAAEEPTQKPESPGEPPPGLELFRWQWHEVE) are Cytoplasmic-facing. Residues 46-66 (APYLVALWILVASLAKIVFHL) form a helical membrane-spanning segment. The Extracellular segment spans residues 67 to 73 (SRKVTSL). A helical transmembrane segment spans residues 74 to 94 (VPESCLLILLGLVLGGIVLAV). At 95–103 (AKKAEYQLE) the chain is on the cytoplasmic side. Residues 104-124 (PGTFFLFLLPPIVLDSGYFMP) traverse the membrane as a helical segment. Residues 125–134 (SRLFFDNLGA) lie on the Extracellular side of the membrane. Residues 135–155 (ILTYAVVGTLWNAFTTGAALW) form a helical membrane-spanning segment. Topologically, residues 156–173 (GLQQAGLVAPRVQAGLLD) are cytoplasmic. A helical transmembrane segment spans residues 174–194 (FLLFGSLISAVDPVAVLAVFE). The Extracellular segment spans residues 195 to 200 (EVHVNE). Asn199 is a glycosylation site (N-linked (GlcNAc...) asparagine). Residues 201–221 (TLFIIVFGESLLNDAVTVVLY) traverse the membrane as a helical segment. At 222–246 (KVCNSFVEMGSANVQATDYLKGVAS) the chain is on the cytoplasmic side. A helical transmembrane segment spans residues 247-267 (LFVVSLGGAAVGLVFAFLLAL). The Extracellular segment spans residues 268–276 (TTRFTKRVR). The helical transmembrane segment at 277-297 (IIEPLLVFLLAYAAYLTAEMA) threads the bilayer. At 298 to 331 (SLSAILAVTMCGLGCKKYVEANISHKSRTTVKYT) the chain is on the cytoplasmic side. The chain crosses the membrane as a helical span at residues 332-352 (MKTLASCAETVIFMLLGISAV). Residues 353–360 (DSSKWAWD) lie on the Extracellular side of the membrane. The helical transmembrane segment at 361–381 (SGLVLGTLIFILFFRALGVVL) threads the bilayer. Over 382-398 (QTWVLNQFRLVPLDKID) the chain is Cytoplasmic. Residues 399 to 419 (QVVMSYGGLRGAVAFALVILL) traverse the membrane as a helical segment. The Extracellular portion of the chain corresponds to 420-428 (DRTKVPAKD). The helical transmembrane segment at 429–449 (YFVATTIVVVFFTVIVQGLTI) threads the bilayer. The Cytoplasmic segment spans residues 450–896 (KPLVKWLKVK…CIQFNRGSRL (447 aa)). Residues 576–721 (GSGACLDLQV…SETEKEDDEG (146 aa)) form a required for interaction with ARRB2 region. Disordered regions lie at residues 658–686 (TKSK…GKHR), 701–720 (ESEE…EDDE), and 818–864 (HPRG…QQQE). Residues 660–672 (SKPRPRKTGRRKK) show a composition bias toward basic residues. Over residues 854 to 864 (ESSADLPQQQE) the composition is skewed to polar residues.

Belongs to the monovalent cation:proton antiporter 1 (CPA1) transporter (TC 2.A.36) family. As to quaternary structure, interacts with CHP1 and CHP2. Interacts with ARRB2; facilitates the endocytosis of SLC9A5 from the plasma membrane. Interacts with RACK1; this interaction positively regulates SLC9A5 activity and promotes SLC9A5 localization to focal adhesions. Interacts with SCAMP2; this interaction regulates SLC9A5 cell-surface targeting and SLC9A5 activity. Post-translationally, phosphorylated by PRKAA2; promotes its accumulation at the cell surface. Phosphorylated by CSNK2A1 in a manner favoring its beta-arrestin binding and endocytosis. Mainly expressed in brain. Expressed in neurons of the central and peripheral nervous system. Expressed also in testis, spleen, and skeletal muscle.

The protein localises to the cell membrane. Its subcellular location is the recycling endosome membrane. The protein resides in the cell projection. It localises to the dendritic spine membrane. It is found in the synaptic cell membrane. The protein localises to the cell junction. Its subcellular location is the focal adhesion. It catalyses the reaction Na(+)(in) + H(+)(out) = Na(+)(out) + H(+)(in). ATP-depletion almost completely abolishes SLC9A5 activity. Inhibited by amiloride compounds. Functionally, plasma membrane Na(+)/H(+) antiporter. Mediates the electroneutral exchange of intracellular H(+) ions for extracellular Na(+) in 1:1 stoichiometry, thus regulating intracellular pH homeostasis, in particular in neural tissues. Acts as a negative regulator of dendritic spine growth. Plays a role in postsynaptic remodeling and signaling. Can also contribute to organellar pH regulation, with consequences for receptor tyrosine kinase trafficking. The sequence is that of Sodium/hydrogen exchanger 5 from Homo sapiens (Human).